A 183-amino-acid chain; its full sequence is Secreted RxLR effector protein 41 (183 aa).

The signal sequence occupies residues 1 to 18 (MLGFVTGVLAISAHVIVS). Positions 41–65 (RRLRSYETDTASARAEEGTSDIEER) match the RxLR-dEER motif. Residue N88 is glycosylated (N-linked (GlcNAc...) asparagine).

Belongs to the RxLR effector family.

The protein localises to the secreted. It localises to the host nucleus. The protein resides in the host cytoplasm. Its function is as follows. Secreted effector that dos not suppress the host cell death induced by cell death-inducing proteins. In Plasmopara viticola (Downy mildew of grapevine), this protein is Secreted RxLR effector protein 41.